Here is a 200-residue protein sequence, read N- to C-terminus: LHFPL tetraspan subfamily member 7 protein (200 aa).

Helical transmembrane passes span 5–27 (VWVA…PAWF), 68–88 (VSAV…IFLL), 113–133 (AATA…SPFI), and 150–170 (LGWG…LPII).

Belongs to the TMEM211 family.

The protein resides in the membrane. The chain is LHFPL tetraspan subfamily member 7 protein from Homo sapiens (Human).